A 285-amino-acid polypeptide reads, in one-letter code: Shikimate dehydrogenase (NADP(+)) (285 aa).

Shikimate-binding positions include 19–21 (SLS) and Thr66. The Proton acceptor role is filled by Lys70. The shikimate site is built by Asn91 and Asp107. Residues 129–133 (GSGGA) and Leu228 contribute to the NADP(+) site. Tyr230 lines the shikimate pocket. NADP(+) is bound at residue Gly251.

The protein belongs to the shikimate dehydrogenase family. Homodimer.

The enzyme catalyses shikimate + NADP(+) = 3-dehydroshikimate + NADPH + H(+). The protein operates within metabolic intermediate biosynthesis; chorismate biosynthesis; chorismate from D-erythrose 4-phosphate and phosphoenolpyruvate: step 4/7. Its function is as follows. Involved in the biosynthesis of the chorismate, which leads to the biosynthesis of aromatic amino acids. Catalyzes the reversible NADPH linked reduction of 3-dehydroshikimate (DHSA) to yield shikimate (SA). This Prochlorococcus marinus subsp. pastoris (strain CCMP1986 / NIES-2087 / MED4) protein is Shikimate dehydrogenase (NADP(+)).